Consider the following 181-residue polypeptide: Interleukin-24 (181 aa).

Residues 1–26 (MSWGLQILPCLSLILLLWNQVPGLEG) form the signal peptide. A disulfide bond links cysteine 34 and cysteine 81. Asparagine 74 carries N-linked (GlcNAc...) asparagine glycosylation. Lysine 97 is covalently cross-linked (Glycyl lysine isopeptide (Lys-Gly) (interchain with G-Cter in ubiquitin)).

The protein belongs to the IL-10 family. Post-translationally, glycosylated. In terms of processing, ubiquitination at Lys-97 promotes proteasomal degradation. As to expression, selectively expressed by Th2 cells. Expressed in the liver.

It localises to the secreted. In terms of biological role, multifunctional cytokine mainly produced by T-cells that plays a regulatory role in immune response, tissue homeostasis, host defense, and oncogenesis. Possesses antiviral functions and induces the type I interferon response during influenza infection. Signals through two receptor complexes IL20RA/IL20RB or IL20RB/IL22RA1. In turn, stimulates the JAK1-STAT3 and MAPK pathways and promotes the secretion of pro-inflammatory mediators including IL8 and MMP1. Intracellularly, maintains endoplasmic reticulum homeostasis by restricting the eIF2alpha-CHOP pathway-mediated stress signal. In addition, acts as a quality control mechanism for the ubiquitin proteasome system by alerting the cell to proteasome dysfunction through activation of PKR/EIF2AK2. This is Interleukin-24 (Il24) from Mus musculus (Mouse).